An 874-amino-acid polypeptide reads, in one-letter code: Interleukin-12 receptor subunit beta-2 (874 aa).

A signal peptide spans 1–23 (MAQTVRECSLALLFLFMWLLIKA). The Extracellular portion of the chain corresponds to 24–637 (NIDVCKLGTV…REFCPQGKAN (614 aa)). 14 N-linked (GlcNAc...) asparagine glycosylation sites follow: N48, N101, N114, N142, N151, N169, N179, N224, N252, N279, N287, N323, N391, and N495. Fibronectin type-III domains are found at residues 139-237 (PPQN…FLDI), 242-335 (PPWD…TPEE), 336-430 (EPVG…NIVD), 438-530 (APHQ…IRGD), and 536-635 (PVSG…PQGK). The WSXWS motif signature appears at 321-325 (WSNWS). Residues 638 to 658 (WKAFVISSICIAIITVGTFSI) form a helical membrane-spanning segment. The Cytoplasmic segment spans residues 659–874 (RYFRQKAFTL…GYDSLMSNEA (216 aa)). The Box 1 motif motif lies at 677 to 685 (YSRTIPDPA). A phosphotyrosine mark is found at Y757, Y804, and Y811.

It belongs to the type I cytokine receptor family. Type 2 subfamily. As to quaternary structure, heterodimer/heterooligomer; disulfide-linked. The functional high affinity IL12 receptor is composed of I12RB1 and IL12RB2. Il12RB2 binds JAK2 (via its N-terminal) through a membrane-proximal region of the cytoplasmic domain. Post-translationally, on IL12 stimulation, phosphorylated on C-terminal tyrosine residues. Phosphorylation of any one of Tyr-757, Tyr-804 or Tyr-811 can activate STAT4, IFN-gamma production, and T-cell proliferation. Tyr-811 is the dominant site of cell proliferation. Expressed in developing T-helper (TH) cells.

The protein localises to the membrane. In terms of biological role, receptor for interleukin-12. This subunit is the signaling component coupling to the JAK2/STAT4 pathway. Promotes the proliferation of T-cells as well as NK cells. Induces the promotion of T-cells towards the Th1 phenotype by strongly enhancing IFN-gamma production. Can also activate STAT3. The protein is Interleukin-12 receptor subunit beta-2 (Il12rb2) of Mus musculus (Mouse).